Here is a 273-residue protein sequence, read N- to C-terminus: Ribosomal RNA small subunit methyltransferase A (273 aa).

Residues Asn-18, Leu-20, Gly-45, Glu-66, Asp-91, and Asn-113 each contribute to the S-adenosyl-L-methionine site.

This sequence belongs to the class I-like SAM-binding methyltransferase superfamily. rRNA adenine N(6)-methyltransferase family. RsmA subfamily.

The protein localises to the cytoplasm. The catalysed reaction is adenosine(1518)/adenosine(1519) in 16S rRNA + 4 S-adenosyl-L-methionine = N(6)-dimethyladenosine(1518)/N(6)-dimethyladenosine(1519) in 16S rRNA + 4 S-adenosyl-L-homocysteine + 4 H(+). Specifically dimethylates two adjacent adenosines (A1518 and A1519) in the loop of a conserved hairpin near the 3'-end of 16S rRNA in the 30S particle. May play a critical role in biogenesis of 30S subunits. This Salmonella schwarzengrund (strain CVM19633) protein is Ribosomal RNA small subunit methyltransferase A.